Reading from the N-terminus, the 313-residue chain is MMVDENVETKASTLVASVDHGFGSGSGHDHHGLSASVPLLGVNWKKRRMPRQRRSSSSFNLLSFPPPMPPISHVPTPLPARKIDPRKLRFLFQKELKNSDVSSLRRMILPKKAAEAHLPALECKEGIPIRMEDLDGFHVWTFKYRYWPNNNSRMYVLENTGDFVNAHGLQLGDFIMVYQDLYSNNYVIQARKASEEEEVDVINLEEDDVYTNLTRIENTVVNDLLLQDFNHHNNNNNNNSNSNSNKCSYYYPVIDDVTTNTESFVYDTTALTSNDTPLDFLGGHTTTTNNYYSKFGTFDGLGSVENISLDDFY.

The segment at residues 92–194 is a DNA-binding region (TF-B3); it reads FQKELKNSDV…NYVIQARKAS (103 aa).

In terms of assembly, interacts with KIN10. Post-translationally, phosphorylation by KIN10 increases its stability. Phosphorylated at one or more of the Ser-55, Ser-56 and/or Ser-57 residues. In terms of tissue distribution, expressed in cotyledons and hypocotyls.

Its subcellular location is the nucleus. Its activity is regulated as follows. Phosphorylation by KIN10 is required to positively regulates embryogenesis, seed yield, and plant growth at high temperature. Transcription regulator involved in gene regulation during late embryogenesis. Its expression to the epidermis is sufficient to control foliar organ identity by regulating positively the synthesis abscisic acid (ABA) and negatively gibberellin production. Negatively regulates TTG1 in the embryo. Positively regulates the abundance of the ABI3 protein in the seed. Cooperates with KIN10 to regulate developmental phase transitions and lateral organ development and act both as positive regulators of abscisic acid (ABA) signaling during germination. The sequence is that of B3 domain-containing transcription factor FUS3 (FUS3) from Arabidopsis thaliana (Mouse-ear cress).